A 371-amino-acid chain; its full sequence is MNKNCLICHRKAAGQHYGVLSCFACKMFFHRMVVENLHYCCQKFNKCYEKFIILPKCKACRYQKCLEMGMQAFPRRVKSFEESMDLKIQRMLMNLSEMDEQRHWRMLNSYSIEDPSLGDVLVDSNVMKIMRKPSNQKVTAHEWAFLDVYSRISHFSNFEFMNNISFADRKLIFSFNCLRTGVFHGSMRTLREQRDCLLTPSGEDVYPDAVHNLFKDSPGLLNRTCCLLVSKLIELKVTNEEYQLLSLIFFCNPTISHNLSDFARNTLASHQIKYSSALFRHLQITNPGTAPVRFQELISLVHVINRVTNDMQHVSMMFQCMIPSFKFKQLVTDTFVDCGVVQKKSNVKILNEKPCADSSQDFIFHKNKFIH.

A DNA-binding region (nuclear receptor) is located at residues 2–77 (NKNCLICHRK…MGMQAFPRRV (76 aa)). 2 consecutive NR C4-type zinc fingers follow at residues 5–25 (CLICHRKAAGQHYGVLSCFAC) and 41–60 (CQKFNKCYEKFIILPKCKAC). One can recognise an NR LBD domain in the interval 98–337 (MDEQRHWRML…KQLVTDTFVD (240 aa)).

It belongs to the nuclear hormone receptor family.

The protein localises to the nucleus. Orphan nuclear receptor. The protein is Nuclear hormone receptor family member nhr-51 (nhr-51) of Caenorhabditis elegans.